The following is a 208-amino-acid chain: Uracil phosphoribosyltransferase (208 aa).

5-phospho-alpha-D-ribose 1-diphosphate-binding positions include arginine 78, arginine 103, and 130–138 (DPMFATGGT). Uracil is bound by residues isoleucine 193 and 198–200 (GDA). Aspartate 199 serves as a coordination point for 5-phospho-alpha-D-ribose 1-diphosphate.

It belongs to the UPRTase family. Mg(2+) is required as a cofactor.

The catalysed reaction is UMP + diphosphate = 5-phospho-alpha-D-ribose 1-diphosphate + uracil. It functions in the pathway pyrimidine metabolism; UMP biosynthesis via salvage pathway; UMP from uracil: step 1/1. Its activity is regulated as follows. Allosterically activated by GTP. Functionally, catalyzes the conversion of uracil and 5-phospho-alpha-D-ribose 1-diphosphate (PRPP) to UMP and diphosphate. This chain is Uracil phosphoribosyltransferase, found in Campylobacter jejuni (strain RM1221).